Here is a 382-residue protein sequence, read N- to C-terminus: Alanine racemase 1 (382 aa).

The Proton acceptor; specific for D-alanine role is filled by Lys-39. Lys-39 carries the N6-(pyridoxal phosphate)lysine modification. Arg-138 contacts substrate. The active-site Proton acceptor; specific for L-alanine is the Tyr-265. Met-312 is a substrate binding site.

This sequence belongs to the alanine racemase family. Pyridoxal 5'-phosphate is required as a cofactor.

It carries out the reaction L-alanine = D-alanine. Its pathway is amino-acid biosynthesis; D-alanine biosynthesis; D-alanine from L-alanine: step 1/1. Catalyzes the interconversion of L-alanine and D-alanine. May also act on other amino acids. The chain is Alanine racemase 1 (alr1) from Staphylococcus aureus (strain NCTC 8325 / PS 47).